The sequence spans 373 residues: Alanine dehydrogenase (373 aa).

Substrate is bound by residues arginine 15 and lysine 74. The Proton donor/acceptor role is filled by histidine 95. NAD(+) is bound by residues serine 133, 177 to 178, aspartate 197, serine 219, 238 to 239, 266 to 269, and 298 to 301; these read QA, VL, IAID, and VANM. Catalysis depends on aspartate 269, which acts as the Proton donor/acceptor.

This sequence belongs to the AlaDH/PNT family. Homohexamer. Trimer of dimer.

It carries out the reaction L-alanine + NAD(+) + H2O = pyruvate + NH4(+) + NADH + H(+). Its pathway is amino-acid degradation; L-alanine degradation via dehydrogenase pathway; NH(3) and pyruvate from L-alanine: step 1/1. In terms of biological role, catalyzes the reversible reductive amination of pyruvate to L-alanine. May play a role in cell wall synthesis as L-alanine is an important constituent of the peptidoglycan layer. This is Alanine dehydrogenase (ald) from Staphylococcus haemolyticus (strain JCSC1435).